A 286-amino-acid polypeptide reads, in one-letter code: 4-hydroxybenzoate octaprenyltransferase (286 aa).

Helical transmembrane passes span 20–40 (IGTL…AQGL), 43–63 (IKVL…GCII), 96–116 (LFTL…PLVV), 142–162 (FLGI…LGEV), 167–187 (WWLF…YAIV), 210–230 (QIIG…GLVA), 235–255 (IYGL…RLIF), and 266–286 (FLNN…DYMI).

This sequence belongs to the UbiA prenyltransferase family. Mg(2+) is required as a cofactor.

The protein resides in the cell inner membrane. The catalysed reaction is all-trans-octaprenyl diphosphate + 4-hydroxybenzoate = 4-hydroxy-3-(all-trans-octaprenyl)benzoate + diphosphate. Its pathway is cofactor biosynthesis; ubiquinone biosynthesis. In terms of biological role, catalyzes the prenylation of para-hydroxybenzoate (PHB) with an all-trans polyprenyl group. Mediates the second step in the final reaction sequence of ubiquinone-8 (UQ-8) biosynthesis, which is the condensation of the polyisoprenoid side chain with PHB, generating the first membrane-bound Q intermediate 3-octaprenyl-4-hydroxybenzoate. This is 4-hydroxybenzoate octaprenyltransferase from Shewanella frigidimarina (strain NCIMB 400).